A 265-amino-acid polypeptide reads, in one-letter code: MTTQSLKAEAVALEADVMALDAEAKALNDKLESLDLAGRLALIAGLEGRAVFTTSLGIEDQVITAAIGSNRLDIEVATLKTGRLFNETVALIDQTEETYDILIKRYYPEKADIDAYVAQYGMNGFYESVEARHACCGVRKLKPLARALDGASYWITGLRRGQSGNRATTPFAEADVERGLIKINPLADWGIETIQAHVAAEGIPVNPLHSRGYPSIGCEPCTRAIKPGEPERAGRWWWENDEKRECGLHVPEAASSIIPNASNAA.

[4Fe-4S] cluster is bound by residues cysteine 135, cysteine 136, cysteine 218, and cysteine 221. The Nucleophile; cysteine thiosulfonate intermediate role is filled by cysteine 246.

It belongs to the PAPS reductase family. CysH subfamily. The cofactor is [4Fe-4S] cluster.

Its subcellular location is the cytoplasm. The enzyme catalyses [thioredoxin]-disulfide + sulfite + AMP + 2 H(+) = adenosine 5'-phosphosulfate + [thioredoxin]-dithiol. Its pathway is sulfur metabolism; hydrogen sulfide biosynthesis; sulfite from sulfate. Functionally, catalyzes the formation of sulfite from adenosine 5'-phosphosulfate (APS) using thioredoxin as an electron donor. In Rhizobium meliloti (strain 1021) (Ensifer meliloti), this protein is Adenosine 5'-phosphosulfate reductase.